A 359-amino-acid polypeptide reads, in one-letter code: Doublesex- and mab-3-related transcription factor B1 (359 aa).

The DM DNA-binding region spans 7-54 (CSRCRNHGYLVPVKGHTGKCRWKQCICDKCYLITERQKIMAAQKVLRT). Disordered regions lie at residues 111-149 (PPQA…RDRS) and 262-359 (SGLV…EQSN). Pro residues-rich tracts occupy residues 277–299 (CSPP…PQPQ) and 315–325 (LPPPPPPPSPP). Over residues 348–359 (EPSQDSPQEQSN) the composition is skewed to polar residues.

Belongs to the DMRT family. In terms of tissue distribution, brain.

Its subcellular location is the nucleus. In Mus musculus (Mouse), this protein is Doublesex- and mab-3-related transcription factor B1 (Dmrtb1).